We begin with the raw amino-acid sequence, 186 residues long: CoB--CoM heterodisulfide reductase iron-sulfur subunit C 2 (186 aa).

4Fe-4S ferredoxin-type domains lie at 26–56 and 67–99; these read GEDI…AYRT and LDDV…TEII. Cysteine 36, cysteine 39, cysteine 42, cysteine 46, cysteine 79, cysteine 82, cysteine 85, and cysteine 89 together coordinate [4Fe-4S] cluster.

The protein belongs to the HdrC family. The heterodisulfide reductase is composed of three subunits; HdrA, HdrB and HdrC. [4Fe-4S] cluster serves as cofactor.

It functions in the pathway cofactor metabolism; coenzyme M-coenzyme B heterodisulfide reduction; coenzyme B and coenzyme M from coenzyme M-coenzyme B heterodisulfide: step 1/1. In terms of biological role, part of a complex that catalyzes the reversible reduction of CoM-S-S-CoB to the thiol-coenzymes H-S-CoM (coenzyme M) and H-S-CoB (coenzyme B). This Methanocaldococcus jannaschii (strain ATCC 43067 / DSM 2661 / JAL-1 / JCM 10045 / NBRC 100440) (Methanococcus jannaschii) protein is CoB--CoM heterodisulfide reductase iron-sulfur subunit C 2 (hdrC2).